Reading from the N-terminus, the 813-residue chain is Receptor-like protein 48 (813 aa).

The N-terminal stretch at 1–30 (MHSCSERRMMTVIWSLCLIFCLSNSILAIA) is a signal peptide. Topologically, residues 31–786 (KDLCLPDQRD…EDEEKEEKNQ (756 aa)) are extracellular. N-linked (GlcNAc...) asparagine glycans are attached at residues Asn69, Asn105, and Asn123. LRR repeat units lie at residues 111-134 (LQHL…SIGN), 136-159 (KYLR…LGSL), and 160-182 (SYLT…SGGN). N-linked (GlcNAc...) asparagine glycans are attached at residues Asn195 and Asn216. 21 LRR repeats span residues 196–219 (LSSV…NMSS), 220–244 (LSKL…LFMI), 245–260 (PSLN…NISS), 261–285 (HSEL…LSKL), 288–310 (LRDL…IFLH), 311–335 (LKSL…FFSH), 336–359 (LMSL…SFPS), 361–381 (TGTL…LENQ), 382–405 (TSLF…LWRL), 406–432 (PTLS…IYSF), 434–450 (ASDN…VCEL), 451–473 (VSLN…CFEN), 475–498 (KTIS…IISE), 500–521 (LTSL…LIKC), 523–544 (DLEF…WLRS), 545–571 (LSNL…SLSF), 572–595 (PKLR…YFAG), 642–666 (FTIY…IGIL), 667–690 (KELI…LSNL), 691–714 (SNLQ…LGKL), and 716–739 (FLEW…QIQS). Asn248 and Asn257 each carry an N-linked (GlcNAc...) asparagine glycan. Asn380 is a glycosylation site (N-linked (GlcNAc...) asparagine). Residue Asn484 is glycosylated (N-linked (GlcNAc...) asparagine). N-linked (GlcNAc...) asparagine glycosylation is found at Asn673 and Asn689. Asn721 and Asn741 each carry an N-linked (GlcNAc...) asparagine glycan. A disordered region spans residues 756-785 (FLNKCGGEEEEEEEATKQEEDEDEEKEEKN). The span at 763 to 781 (EEEEEEEATKQEEDEDEEK) shows a compositional bias: acidic residues. A helical transmembrane segment spans residues 787–807 (VFSWIAAAIGYVPGVFCGLTI). Residues 808–813 (AHILTS) lie on the Cytoplasmic side of the membrane.

Belongs to the RLP family.

The protein localises to the cell membrane. Its function is as follows. Plays a role in root hair development. The protein is Receptor-like protein 48 of Arabidopsis thaliana (Mouse-ear cress).